The chain runs to 278 residues: Elongation factor Ts (278 aa).

The segment at 79 to 82 (TDFV) is involved in Mg(2+) ion dislocation from EF-Tu.

This sequence belongs to the EF-Ts family.

The protein localises to the cytoplasm. Associates with the EF-Tu.GDP complex and induces the exchange of GDP to GTP. It remains bound to the aminoacyl-tRNA.EF-Tu.GTP complex up to the GTP hydrolysis stage on the ribosome. The sequence is that of Elongation factor Ts from Borrelia hermsii (strain HS1 / DAH).